Reading from the N-terminus, the 121-residue chain is N-alpha-acetyltransferase 38, NatC auxiliary subunit (121 aa).

In terms of domain architecture, Sm spans 40–113; that stretch reads PGRRKLQKWL…IVSLSIDEPD (74 aa).

It belongs to the snRNP Sm proteins family. As to quaternary structure, component of the N-terminal acetyltransferase C (NatC) complex, which is composed of Naa35, Sbat/Naa38 and Naa30A. Interacts with Smn and Hez; along with Hez and Vlet, may form an accessory subcomplex involved in SMN complex function.

The protein localises to the cytoplasm. It is found in the nucleus. Functionally, auxiliary component of the N-terminal acetyltransferase C (NatC) complex which catalyzes acetylation of N-terminal methionine residues. May have an accessory function in the survival motor neuron (SMN) complex. This chain is N-alpha-acetyltransferase 38, NatC auxiliary subunit, found in Drosophila melanogaster (Fruit fly).